A 308-amino-acid chain; its full sequence is Hydroxyacylglutathione hydrolase, mitochondrial (308 aa).

The transit peptide at 1–13 (MVLGRGLLGRRSL) directs the protein to the mitochondrion. The Zn(2+) site is built by His102, His104, Asp106, and His107. N6-acetyllysine is present on Lys116. Positions 158 and 182 each coordinate Zn(2+). Substrate contacts are provided by residues 191-193 (KFY) and 221-223 (HEY). Position 221 (His221) interacts with Zn(2+). The residue at position 229 (Lys229) is an N6-acetyllysine; alternate. Position 229 is an N6-succinyllysine; alternate (Lys229). 297 to 300 (RKEK) lines the substrate pocket.

Belongs to the metallo-beta-lactamase superfamily. Glyoxalase II family. As to quaternary structure, monomer. The cofactor is Zn(2+). As to expression, testis.

The protein localises to the mitochondrion matrix. It is found in the cytoplasm. The enzyme catalyses an S-(2-hydroxyacyl)glutathione + H2O = a 2-hydroxy carboxylate + glutathione + H(+). It carries out the reaction (R)-S-lactoylglutathione + H2O = (R)-lactate + glutathione + H(+). It functions in the pathway secondary metabolite metabolism; methylglyoxal degradation; (R)-lactate from methylglyoxal: step 2/2. Thiolesterase that catalyzes the hydrolysis of S-D-lactoyl-glutathione to form glutathione and D-lactic acid. This chain is Hydroxyacylglutathione hydrolase, mitochondrial (HAGH), found in Macaca fascicularis (Crab-eating macaque).